We begin with the raw amino-acid sequence, 270 residues long: MTLLKDLLADPGLPRLEARMLAEHVLGRSRAWLLAHDTDPVEPAHEAAWRQLAARRLAGEPMAYLLGGREFMGHWYALTPDVLIPRPDTELLVETALHWLQGRAAPRVLDLGTGSGAIAVSVALGCPQAEVTATDLSAAALAVAEGNAQRLGARVRCLAGDWYEALPAQDRYDLIVSNPPYIAREDAHLAQGDLRFEPRGALTDENDGLAALARIAGGAPGRLLPGGAIWMEHGWDQAEAARALLRQAGLREVHSRRDLAGIERISGGYL.

Residues 112 to 116, Asp-135, Trp-162, and Asn-178 contribute to the S-adenosyl-L-methionine site; that span reads GTGSG. 178–181 serves as a coordination point for substrate; the sequence is NPPY.

This sequence belongs to the protein N5-glutamine methyltransferase family. PrmC subfamily.

It carries out the reaction L-glutaminyl-[peptide chain release factor] + S-adenosyl-L-methionine = N(5)-methyl-L-glutaminyl-[peptide chain release factor] + S-adenosyl-L-homocysteine + H(+). Its function is as follows. Methylates the class 1 translation termination release factors RF1/PrfA and RF2/PrfB on the glutamine residue of the universally conserved GGQ motif. This chain is Release factor glutamine methyltransferase, found in Bordetella pertussis (strain Tohama I / ATCC BAA-589 / NCTC 13251).